A 511-amino-acid polypeptide reads, in one-letter code: 2-isopropylmalate synthase (511 aa).

The Pyruvate carboxyltransferase domain maps to Leu-5–Val-267. Residues Asp-14, His-202, His-204, and Asn-238 each contribute to the Mn(2+) site. The interval Arg-393 to Leu-511 is regulatory domain.

It belongs to the alpha-IPM synthase/homocitrate synthase family. LeuA type 1 subfamily. As to quaternary structure, homodimer. The cofactor is Mn(2+).

The protein resides in the cytoplasm. The enzyme catalyses 3-methyl-2-oxobutanoate + acetyl-CoA + H2O = (2S)-2-isopropylmalate + CoA + H(+). It participates in amino-acid biosynthesis; L-leucine biosynthesis; L-leucine from 3-methyl-2-oxobutanoate: step 1/4. Functionally, catalyzes the condensation of the acetyl group of acetyl-CoA with 3-methyl-2-oxobutanoate (2-ketoisovalerate) to form 3-carboxy-3-hydroxy-4-methylpentanoate (2-isopropylmalate). This chain is 2-isopropylmalate synthase, found in Aromatoleum aromaticum (strain DSM 19018 / LMG 30748 / EbN1) (Azoarcus sp. (strain EbN1)).